The following is a 504-amino-acid chain: MAGLKRRVPLHSLRYFISMVGLFSKPGLLPWYARNPPGWSQLFLGTVCKGDFTRVIATKCQKGQKSQKKPSHLGPLDGSWQERLADVVTPLWRLSYEEQLKVKFAAQKKILQRLESYIQMLNGVSVTTAVPKSERLSCLLHPIIPSPVINGYRNKSTFSVNRGPDGNPKTVGFYLGTWRDGNVVCVQSNHLKNIPEKHSQVAQYYEVFLRQSPLEPCLVFHEGGYWRELTVRTNSQGHTMAIITFHPQKLSQEELHVQKEIVKEFFIRGPGAACGLTSLYFQESTMTRCSHQQSPYQLLFGEPYIFEELLSLKIRISPDAFFQINTAGAEMLYRTVGELTGVNSDTILLDICCGTGVIGLSLAQHTSRVLGIELLEQAVEDARWTAAFNGITNSEFHTGQAEKILPGLLKSKEDGQSIVAVVNPARAGLHYKVIQAIRNFRAIHTLVFVSCKLHGESTRNVIELCCPPDPAKKLLGEPFVLQQAVPVDLFPHTPHCELVLLFTR.

The transit peptide at 1–16 directs the protein to the mitochondrion; it reads MAGLKRRVPLHSLRYF. 3 residues coordinate S-adenosyl-L-methionine: Gln-323, Glu-373, and Asn-423. Cys-451 acts as the Nucleophile in catalysis. Glu-497 (proton acceptor) is an active-site residue.

It belongs to the class I-like SAM-binding methyltransferase superfamily. RNA M5U methyltransferase family.

The protein localises to the mitochondrion. It is found in the mitochondrion matrix. It catalyses the reaction uridine(54) in tRNA + S-adenosyl-L-methionine = 5-methyluridine(54) in tRNA + S-adenosyl-L-homocysteine + H(+). The catalysed reaction is a uridine in 12S rRNA + S-adenosyl-L-methionine = a 5-methyluridine in 12S rRNA + S-adenosyl-L-homocysteine + H(+). Mitochondrial S-adenosyl-L-methionine-dependent methyltransferase that catalyzes the formation of 5-methyl-uridine in tRNAs and 12S rRNA. Catalyzes the methylation of uridine at position 54 (m5U54) in all tRNAs. Specifically methylates the uridine in position 429 of 12S rRNA (m5U429). Does not affect RNA stability or mitochondrial translation. This Homo sapiens (Human) protein is tRNA (uracil-5-)-methyltransferase homolog B.